Consider the following 230-residue polypeptide: uncharacterized protein (230 aa).

This is an uncharacterized protein from Encephalitozoon cuniculi (strain GB-M1) (Microsporidian parasite).